The sequence spans 487 residues: Bifunctional cytokinin biosynthesis protein (487 aa).

The adenylate isopentenyltransferase stretch occupies residues 1–266 (MESTNRFMIG…RMASDFCYAS (266 aa)). The tract at residues 267 to 487 (TSISFHPINE…FSRKGELEWV (221 aa)) is cytokinin riboside 5'-monophosphate phosphoribohydrolase. Substrate contacts are provided by residues Glu352, 380–381 (RK), 403–409 (GYGTLEE), and Thr415.

The protein in the N-terminal section; belongs to the IPP transferase family. In the C-terminal section; belongs to the LOG family.

The enzyme catalyses dimethylallyl diphosphate + AMP = N(6)-(dimethylallyl)adenosine 5'-phosphate + diphosphate. It carries out the reaction N(6)-(dimethylallyl)adenosine 5'-phosphate + H2O = N(6)-dimethylallyladenine + D-ribose 5-phosphate. It catalyses the reaction 9-ribosyl-trans-zeatin 5'-phosphate + H2O = trans-zeatin + D-ribose 5-phosphate. Its pathway is secondary metabolite biosynthesis. In terms of biological role, bifunctional cytokinin synthesis protein; part of the gene cluster that mediates the biosynthesis of cytokinins such as fusatin, fusatinic acids or 8-oxofusatin, known for their growth promoting and anti-senescence activities toward host plants. FCK1 is a bifunctional enzyme that performs the first steps in the biosynthesis of Fusarium cytokinins. It first condenses adenosine monophosphate (AMP) with dimethylallyl diphosphate (DMAPP) to yield isoprenyl adenosine monophosphate. It then catalyzes the removal of the phosphoribose to produce isopentenylaldehyde. The cytochrome P450 monooxygenase then converts isopentenylaldehyde to trans-zeatin. A condensation step converts trans-zeatin to fusatin which is further modified to produce fusatinic acid. The mechanism for oxidation of fusatin to fusatinic acid remains unknown. 8-oxofusatin could be produced through several pathways, via direct oxygenation of fusatin, or via the 8-oxo-pentenyladenine intermediate which itself must arise from either the prenylation of 8-oxo-AMP by FCK1 and/or oxygenation of isopentenylaldehyde. Both the FCK3 and FCK4 enzymes act downstream of the identified cytokinins to produce yet unidentified compounds. The sequence is that of Bifunctional cytokinin biosynthesis protein from Fusarium pseudograminearum (strain CS3096) (Wheat and barley crown-rot fungus).